Consider the following 212-residue polypeptide: Deoxyribose-phosphate aldolase (212 aa).

Asp89 acts as the Proton donor/acceptor in catalysis. Lys151 acts as the Schiff-base intermediate with acetaldehyde in catalysis. Lys180 functions as the Proton donor/acceptor in the catalytic mechanism.

Belongs to the DeoC/FbaB aldolase family. DeoC type 1 subfamily.

It localises to the cytoplasm. The enzyme catalyses 2-deoxy-D-ribose 5-phosphate = D-glyceraldehyde 3-phosphate + acetaldehyde. Its pathway is carbohydrate degradation; 2-deoxy-D-ribose 1-phosphate degradation; D-glyceraldehyde 3-phosphate and acetaldehyde from 2-deoxy-alpha-D-ribose 1-phosphate: step 2/2. Functionally, catalyzes a reversible aldol reaction between acetaldehyde and D-glyceraldehyde 3-phosphate to generate 2-deoxy-D-ribose 5-phosphate. This chain is Deoxyribose-phosphate aldolase, found in Clostridium botulinum (strain Langeland / NCTC 10281 / Type F).